Here is an 809-residue protein sequence, read N- to C-terminus: E3 ubiquitin-protein ligase RSP5 (809 aa).

The 105-residue stretch at 1–105 (MPSSISVKLV…GHLDEDTATS (105 aa)) folds into the C2 domain. 3 disordered regions span residues 99–122 (DEDT…KKSN), 139–240 (PSSS…RRTD), and 257–298 (WKRP…DNSS). A compositionally biased stretch (basic and acidic residues) spans 108–122 (RPREETITRDLKKSN). Residues 139–148 (PSSSPHSQAP) are compositionally biased toward polar residues. Residues 149–183 (SGHTASSSTNTSSTTRTNGHSTSSTRNHSTSHPSR) show a composition bias toward low complexity. Residues 184 to 196 (GTAQAVESTLQSG) are compositionally biased toward polar residues. The segment covering 197 to 219 (TTAATNTATTSHRSTNSTSSATR) has biased composition (low complexity). WW domains are found at residues 229-262 (GRLP…RPTL), 331-364 (GELP…DPRR), and 387-420 (GPLP…DPRL). K258 is covalently cross-linked (Glycyl lysine isopeptide (Lys-Gly) (interchain with G-Cter in ubiquitin)). Residues 705-809 (YRGYQESDEV…VEETIGFGQE (105 aa)) enclose the HECT domain. Catalysis depends on C777, which acts as the Glycyl thioester intermediate.

This sequence belongs to the RSP5/NEDD4 family. In terms of assembly, component of the RSP5-BUL1/2 ubiquitin ligase complex composed of at least RSP5 and BUL1 or BUL2. Component of the RSP5-UBA1-UBC5 ubiquitin ligase complex composed of E3 RSP5, E1 UBA1 and E2 UBC5. Also forms a ternary complex with RUP1 and UBP2. Interacts (via WW domains) with LSB1. Interacts (via WW domains) with PIN3/LSB2. Interacts (via WW domains) with RCR1 (via PY motifs). Interacts with UBP2; the interaction is direct. Interacts with HSE1. Interacts with LAS17. Interacts with ROG3. Interacts with ROD1. Interacts with RVS167. Interacts with ubiquitin. Post-translationally, the ubiquitination appears to be the result of an intramolecular transfer of ubiquitin.

Its subcellular location is the cytoplasm. The protein resides in the nucleus. It is found in the cytoskeleton. It localises to the actin patch. It catalyses the reaction S-ubiquitinyl-[E2 ubiquitin-conjugating enzyme]-L-cysteine + [acceptor protein]-L-lysine = [E2 ubiquitin-conjugating enzyme]-L-cysteine + N(6)-ubiquitinyl-[acceptor protein]-L-lysine.. It functions in the pathway protein modification; protein ubiquitination. E3 ubiquitin-protein ligase which accepts ubiquitin from an E2 ubiquitin-conjugating enzyme in the form of a thioester and then directly transfers the ubiquitin to targeted substrates. Component of a RSP5 ubiquitin ligase complex which specifies polyubiquitination and intracellular trafficking of the general amino acid permease GAP1 as well as other cell surface proteins like GAP1, FUR4, MAL61, PMA1 and STE2. The RSP5-BUL1/2 complex is also necessary for the heat-shock element (HSE)-mediated gene expression, nitrogen starvation GLN3-dependent transcription, pressure-induced differential regulation of the two tryptophan permeases TAT1 and TAT2 and sorting efficiency into multivesicular bodies. The RSP5-UBA1-UBC5 ubiquitin ligase complex ubiquitinates RPO21 forming 'Lys-63'-linked polyubiquitin chains. Plays a role in tolerance to o-dinitrobenzene. Involved in actin cytoskeleton organization and dynamics. Ubiquitinates the LAS17-binding proteins LSB1 and PIN3/LSB2 without directing them for degradation and affects LAS17 levels in a SLA1-dependent and LSB1/2-independent manner. Also involved in the degradation of non-functional 18S rRNAs in response to stalled ribosomes by mediating polyubiquitination of monoubiquitinated RPS3/uS3: mediates formation of 'Lys-63'-linked polyubiquitin chains on monoubiquitined RPS3/uS3, promoting the degradation of non-functional 18S rRNAs. The sequence is that of E3 ubiquitin-protein ligase RSP5 (RSP5) from Saccharomyces cerevisiae (strain ATCC 204508 / S288c) (Baker's yeast).